The following is an 810-amino-acid chain: Soluble starch synthase 2-3, chloroplastic/amyloplastic (810 aa).

Residues 1–16 (MSSAVVASSTTFLVAL) constitute a chloroplast transit peptide. Disordered regions lie at residues 43–265 (GRAG…PIPA) and 281–313 (EPDA…SGPL). Residues 63 to 83 (RDAGVVRRADDGENEAAVERA) are compositionally biased toward basic and acidic residues. Positions 84–93 (GEDDEEEEEF) are enriched in acidic residues. A compositionally biased stretch (basic residues) spans 102 to 116 (RSRRGGVGKVLKRRG). Positions 129 to 148 (DAARVRGAAAPAPAPTQDAA) are enriched in low complexity. Residues 281 to 310 (EPDAAEDGDDDDDWADSDASDSEIDQDDDS) show a composition bias toward acidic residues. Lys-333 provides a ligand contact to ADP-alpha-D-glucose.

It belongs to the glycosyltransferase 1 family. Bacterial/plant glycogen synthase subfamily. Expressed most exclusively in endosperm.

Its subcellular location is the plastid. It localises to the amyloplast. It is found in the chloroplast. It carries out the reaction [(1-&gt;4)-alpha-D-glucosyl](n) + ADP-alpha-D-glucose = [(1-&gt;4)-alpha-D-glucosyl](n+1) + ADP + H(+). The protein operates within glycan biosynthesis; starch biosynthesis. Its function is as follows. Plays an important role during endosperm starch synthesis. Determines the type of amylopectin structure of starch grain. Synthesizes long B1 amylopectin chains by elongating short A and B1 chains, independently of the other soluble starch synthases. Barely active in japonica subspecies. This is Soluble starch synthase 2-3, chloroplastic/amyloplastic (SSII-3) from Oryza sativa subsp. indica (Rice).